The primary structure comprises 383 residues: MSKRRVVVGMSGGVDSSVTAWLLKEQGYDVVGLFMKNWEDDDDGEYCSTRQDWIDVVSVADLIGIDVEAVNFAAEYKDRVFAEFLREYSAGRTPNPDVLCNAEIKFKAFLDHAMSLDAEMIATGHYARVRERDGRFELLKAYDHTKDQSYFLHRLNQAQLSKTMFPLGEIPKTKVREIAAQIGLPNAKKKDSTGICFIGERPFRDFLNRYLPTKPGPMKTPDGKIVGEHIGLAFYTFGQRKGIGLGGSKSGNGDPWFVAAKDIASNTLYVVQGHDHPWLLARELVAGNVSWVAGEPPAEGFACGAKTRYRQADAACAFGAATPGPAGEARFSLAFDDAQWAVTPGQSAVLYDGEICLGGGIIESAVIGQPGQTAPARALAEAR.

Residues 9–16 and methionine 35 contribute to the ATP site; that span reads GMSGGVDS. The interaction with target base in tRNA stretch occupies residues 95–97; sequence NPD. Residue cysteine 100 is the Nucleophile of the active site. Residues cysteine 100 and cysteine 196 are joined by a disulfide bond. Glycine 124 contributes to the ATP binding site. Residues 146-148 form an interaction with tRNA region; it reads KDQ. The active-site Cysteine persulfide intermediate is cysteine 196. The interval 308–309 is interaction with tRNA; it reads RY.

The protein belongs to the MnmA/TRMU family.

It localises to the cytoplasm. It catalyses the reaction S-sulfanyl-L-cysteinyl-[protein] + uridine(34) in tRNA + AH2 + ATP = 2-thiouridine(34) in tRNA + L-cysteinyl-[protein] + A + AMP + diphosphate + H(+). Catalyzes the 2-thiolation of uridine at the wobble position (U34) of tRNA, leading to the formation of s(2)U34. This Burkholderia lata (strain ATCC 17760 / DSM 23089 / LMG 22485 / NCIMB 9086 / R18194 / 383) protein is tRNA-specific 2-thiouridylase MnmA.